Reading from the N-terminus, the 249-residue chain is Probable transcriptional regulator ycf27 (249 aa).

Positions 13–126 (HLLIVDDENN…ELEARIQSIL (114 aa)) constitute a Response regulatory domain. Position 62 is a 4-aspartylphosphate (aspartate 62). The H-T-H motif DNA-binding region spans 82-100 (DIPIIMLTALEDVLDKVTG). The segment at residues 142–246 (INLFKTGSLN…ARGTGYLCRK (105 aa)) is a DNA-binding region (ompR/PhoB-type).

The protein localises to the plastid. It is found in the chloroplast. In terms of biological role, probable promoter-specific protein mediating the interaction between DNA and RNA polymerase. This Cyanidium caldarium (Red alga) protein is Probable transcriptional regulator ycf27 (ycf27).